Here is a 334-residue protein sequence, read N- to C-terminus: tRNA-dihydrouridine synthase B (334 aa).

Residues 16–18 (PMA) and Gln70 each bind FMN. Cys100 functions as the Proton donor in the catalytic mechanism. FMN is bound by residues Lys139, 200–202 (NGD), and 224–225 (GR).

The protein belongs to the Dus family. DusB subfamily. FMN serves as cofactor.

It carries out the reaction a 5,6-dihydrouridine in tRNA + NAD(+) = a uridine in tRNA + NADH + H(+). The enzyme catalyses a 5,6-dihydrouridine in tRNA + NADP(+) = a uridine in tRNA + NADPH + H(+). In terms of biological role, catalyzes the synthesis of 5,6-dihydrouridine (D), a modified base found in the D-loop of most tRNAs, via the reduction of the C5-C6 double bond in target uridines. This Serratia marcescens protein is tRNA-dihydrouridine synthase B.